A 265-amino-acid chain; its full sequence is DNA repair protein RecO (265 aa).

It belongs to the RecO family.

In terms of biological role, involved in DNA repair and RecF pathway recombination. In Mycolicibacterium paratuberculosis (strain ATCC BAA-968 / K-10) (Mycobacterium paratuberculosis), this protein is DNA repair protein RecO.